The chain runs to 182 residues: CDP-diacylglycerol--glycerol-3-phosphate 3-phosphatidyltransferase (182 aa).

The Cytoplasmic portion of the chain corresponds to M1–F12. The chain crosses the membrane as a helical span at residues R13–I37. The Periplasmic portion of the chain corresponds to I38–T60. Residues R61 to L81 form a helical membrane-spanning segment. Topologically, residues V82–Y86 are cytoplasmic. Residues H87–S107 form a helical membrane-spanning segment. At L108–P145 the chain is on the periplasmic side. The helical transmembrane segment at D146–M168 threads the bilayer. The Cytoplasmic segment spans residues F169–E181.

This sequence belongs to the CDP-alcohol phosphatidyltransferase class-I family.

The protein localises to the cell inner membrane. It catalyses the reaction a CDP-1,2-diacyl-sn-glycerol + sn-glycerol 3-phosphate = a 1,2-diacyl-sn-glycero-3-phospho-(1'-sn-glycero-3'-phosphate) + CMP + H(+). It participates in phospholipid metabolism; phosphatidylglycerol biosynthesis; phosphatidylglycerol from CDP-diacylglycerol: step 1/2. In terms of biological role, catalyzes the conversion of cytidine diphosphate diacylglycerol (CDP-DG) and glycerol 3-phosphate into phosphatidylglycerol. Essential for the synthesis of anionic phospholipids, thereby playing a role in balancing the ratio of zwitterionic and anionic phospholipids, which is thought to be important for normal membrane function. This is CDP-diacylglycerol--glycerol-3-phosphate 3-phosphatidyltransferase from Yersinia pestis bv. Antiqua (strain Antiqua).